A 90-amino-acid polypeptide reads, in one-letter code: Co-chaperonin GroES (90 aa).

This sequence belongs to the GroES chaperonin family. As to quaternary structure, heptamer of 7 subunits arranged in a ring. Interacts with the chaperonin GroEL.

The protein resides in the cytoplasm. Functionally, together with the chaperonin GroEL, plays an essential role in assisting protein folding. The GroEL-GroES system forms a nano-cage that allows encapsulation of the non-native substrate proteins and provides a physical environment optimized to promote and accelerate protein folding. GroES binds to the apical surface of the GroEL ring, thereby capping the opening of the GroEL channel. In Phocaeicola vulgatus (strain ATCC 8482 / DSM 1447 / JCM 5826 / CCUG 4940 / NBRC 14291 / NCTC 11154) (Bacteroides vulgatus), this protein is Co-chaperonin GroES.